Reading from the N-terminus, the 147-residue chain is Transcriptional regulator MraZ (147 aa).

SpoVT-AbrB domains follow at residues 5–47 (QQLR…SEKE) and 76–123 (TFEI…SKSK).

Belongs to the MraZ family. In terms of assembly, forms oligomers.

It is found in the cytoplasm. The protein localises to the nucleoid. The protein is Transcriptional regulator MraZ of Mycoplasmopsis synoviae (strain 53) (Mycoplasma synoviae).